Reading from the N-terminus, the 49-residue chain is Large ribosomal subunit protein bL33B (49 aa).

The protein belongs to the bacterial ribosomal protein bL33 family.

This chain is Large ribosomal subunit protein bL33B, found in Lacticaseibacillus paracasei (strain ATCC 334 / BCRC 17002 / CCUG 31169 / CIP 107868 / KCTC 3260 / NRRL B-441) (Lactobacillus paracasei).